Consider the following 252-residue polypeptide: Small ribosomal subunit protein uS2A (252 aa).

N-acetylserine is present on S2. Residues 209 to 252 (EVEQQVAEEATTEEAGEEEAKEEVTEEQAEATEWAEENADNVEW) form a disordered region. Over residues 218-252 (ATTEEAGEEEAKEEVTEEQAEATEWAEENADNVEW) the composition is skewed to acidic residues.

It belongs to the universal ribosomal protein uS2 family. As to quaternary structure, component of the small ribosomal subunit. Mature ribosomes consist of a small (40S) and a large (60S) subunit. The 40S subunit contains about 33 different proteins and 1 molecule of RNA (18S). The 60S subunit contains about 49 different proteins and 3 molecules of RNA (25S, 5.8S and 5S). Interacts with RPS21.

It is found in the cytoplasm. Functionally, required for the assembly and/or stability of the 40S ribosomal subunit. Required for the processing of the 20S rRNA-precursor to mature 18S rRNA in a late step of the maturation of 40S ribosomal subunits. The chain is Small ribosomal subunit protein uS2A from Saccharomyces cerevisiae (strain RM11-1a) (Baker's yeast).